A 468-amino-acid polypeptide reads, in one-letter code: 3-isopropylmalate dehydratase large subunit 2 (468 aa).

Positions 349, 409, and 412 each coordinate [4Fe-4S] cluster.

This sequence belongs to the aconitase/IPM isomerase family. LeuC type 1 subfamily. As to quaternary structure, heterodimer of LeuC and LeuD. Requires [4Fe-4S] cluster as cofactor.

It carries out the reaction (2R,3S)-3-isopropylmalate = (2S)-2-isopropylmalate. It participates in amino-acid biosynthesis; L-leucine biosynthesis; L-leucine from 3-methyl-2-oxobutanoate: step 2/4. Its function is as follows. Catalyzes the isomerization between 2-isopropylmalate and 3-isopropylmalate, via the formation of 2-isopropylmaleate. In Bradyrhizobium diazoefficiens (strain JCM 10833 / BCRC 13528 / IAM 13628 / NBRC 14792 / USDA 110), this protein is 3-isopropylmalate dehydratase large subunit 2.